The primary structure comprises 207 residues: Guanylate kinase (207 aa).

The Guanylate kinase-like domain occupies 5 to 184; the sequence is GNLFIVSAPS…ALADLRAIIR (180 aa). 12 to 19 serves as a coordination point for ATP; sequence APSGAGKS.

This sequence belongs to the guanylate kinase family.

The protein resides in the cytoplasm. The enzyme catalyses GMP + ATP = GDP + ADP. In terms of biological role, essential for recycling GMP and indirectly, cGMP. The sequence is that of Guanylate kinase from Shewanella sp. (strain MR-7).